We begin with the raw amino-acid sequence, 65 residues long: Large ribosomal subunit protein bL33c (65 aa).

Belongs to the bacterial ribosomal protein bL33 family.

The protein resides in the plastid. It is found in the chloroplast. This is Large ribosomal subunit protein bL33c from Psilotum nudum (Whisk fern).